A 345-amino-acid polypeptide reads, in one-letter code: Ribosomal RNA small subunit methyltransferase H (345 aa).

Residues 47 to 49, Asp-65, Phe-92, Asp-113, and Gln-120 each bind S-adenosyl-L-methionine; that span reads GGY. The disordered stretch occupies residues 296-345; the sequence is EPGPDEVAGNPRARSAKLRAAERTNAPAHPGGDLMGLLPAPPPQRHGRRR.

It belongs to the methyltransferase superfamily. RsmH family.

The protein resides in the cytoplasm. The enzyme catalyses cytidine(1402) in 16S rRNA + S-adenosyl-L-methionine = N(4)-methylcytidine(1402) in 16S rRNA + S-adenosyl-L-homocysteine + H(+). Its function is as follows. Specifically methylates the N4 position of cytidine in position 1402 (C1402) of 16S rRNA. In Xanthobacter autotrophicus (strain ATCC BAA-1158 / Py2), this protein is Ribosomal RNA small subunit methyltransferase H.